Reading from the N-terminus, the 526-residue chain is Protein spinster homolog 1 (526 aa).

Positions 1 to 44 are disordered; the sequence is MTSRRSHGDVTPFLTQADNTEEEGVRDPESQSSDEEEEEGKDHG. Helical transmembrane passes span 59–79, 98–118, 126–146, 159–179, 187–207, 218–238, 272–292, 321–341, 355–375, 384–404, 419–439, and 463–483; these read VIIV…RFTV, GLVQ…FGYL, LIMC…SFVS, LVGV…ADLF, MLSF…IVGS, WALR…IFVA, FILS…LALW, MIFG…GVEI, LVCA…LAFA, VFIF…ADIL, LQIV…IGVI, and MICA…ALFI.

This sequence belongs to the major facilitator superfamily. Spinster (TC 2.A.1.49) family.

The protein resides in the lysosome membrane. It carries out the reaction a 1-acyl-sn-glycero-3-phosphocholine(out) + H(+)(out) = a 1-acyl-sn-glycero-3-phosphocholine(in) + H(+)(in). It catalyses the reaction a 1-acyl-sn-glycero-3-phosphoethanolamine(out) + H(+)(out) = a 1-acyl-sn-glycero-3-phosphoethanolamine(in) + H(+)(in). The enzyme catalyses a 1-O-(1Z-alkenyl)-sn-glycero-3-phosphocholine(out) + H(+)(out) = a 1-O-(1Z-alkenyl)-sn-glycero-3-phosphocholine(in) + H(+)(in). The catalysed reaction is a 1-O-(1Z-alkenyl)-sn-glycero-3-phosphoethanolamine(out) + H(+)(out) = a 1-O-(1Z-alkenyl)-sn-glycero-3-phosphoethanolamine(in) + H(+)(in). Its function is as follows. Mediates the rate-limiting, proton-dependent, lysosomal efflux of lysophospholipids. Selective for zwitterionic headgroups such as lysophosphatidylcholine (LPC) and lysophosphatidylethanolamine (LPE). Essential player in lysosomal homeostasis. This is Protein spinster homolog 1 (spns1) from Xenopus laevis (African clawed frog).